Here is a 113-residue protein sequence, read N- to C-terminus: Fruiting body-specific class I hydrophobin fbh1 (113 aa).

The N-terminal stretch at 1–20 (MFSIRIATVVLAASALLAAA) is a signal peptide. 4 disulfide bridges follow: C33-C92, C40-C86, C41-C73, and C93-C106.

Belongs to the fungal hydrophobin family. As to quaternary structure, self-assembles to form functional amyloid fibrils called rodlets. Self-assembly into fibrillar rodlets occurs spontaneously at hydrophobic:hydrophilic interfaces and the rodlets further associate laterally to form amphipathic monolayers.

Its subcellular location is the secreted. It is found in the cell wall. In terms of biological role, aerial growth, conidiation, and dispersal of filamentous fungi in the environment rely upon a capability of their secreting small amphipathic proteins called hydrophobins (HPBs) with low sequence identity. Class I can self-assemble into an outermost layer of rodlet bundles on aerial cell surfaces, conferring cellular hydrophobicity that supports fungal growth, development and dispersal; whereas Class II form highly ordered films at water-air interfaces through intermolecular interactions but contribute nothing to the rodlet structure. Fbh1 is a fruiting body-specific class I hydrophobin that is involved in the growth rate and primordia formation. In Pleurotus ostreatus (strain PC15) (Oyster mushroom), this protein is Fruiting body-specific class I hydrophobin fbh1.